The sequence spans 397 residues: Decapping and exoribonuclease protein (397 aa).

Residues 1-20 (MESRGTKREAGKIEVAEPRN) show a composition bias toward basic and acidic residues. The tract at residues 1–37 (MESRGTKREAGKIEVAEPRNKLPRPAPSLPTDPALYS) is disordered. Arginine 58 contacts substrate. The segment at 67-88 (LRYYSPPPTNGQSPNFDLRDGY) is disordered. Residues glutamate 101 and 131–133 (WRG) contribute to the substrate site. Glutamate 192 provides a ligand contact to Mg(2+). Residues cysteine 217 and glutamate 234 each coordinate substrate. Mg(2+) is bound by residues glutamate 234, aspartate 236, glutamate 253, and leucine 254. Substrate-binding residues include lysine 255 and glutamine 280. Residue threonine 392 is modified to Phosphothreonine. Serine 394 is subject to Phosphoserine.

Belongs to the DXO/Dom3Z family. Mg(2+) is required as a cofactor.

Its subcellular location is the nucleus. It carries out the reaction a 5'-end triphospho-ribonucleoside in mRNA + H2O = a 5'-end phospho-ribonucleoside in mRNA + diphosphate + H(+). The enzyme catalyses a 5'-end NAD(+)-phospho-ribonucleoside in mRNA + H2O = a 5'-end phospho-ribonucleoside in mRNA + NAD(+) + H(+). It catalyses the reaction a 5'-end NAD(+)-phospho-ribonucleoside in snoRNA + H2O = a 5'-end phospho-ribonucleoside in snoRNA + NAD(+) + H(+). The catalysed reaction is a 5'-end (N(7)-methyl 5'-triphosphoguanosine)-ribonucleoside-ribonucleotide in mRNA + H2O = a (N(7)-methyl 5'-triphosphoguanosine)-nucleoside + a 5'-end phospho-ribonucleoside in mRNA + H(+). It carries out the reaction a 5'-end FAD-phospho-ribonucleoside in mRNA + H2O = a 5'-end phospho-ribonucleoside in mRNA + FAD + H(+). The enzyme catalyses a 5'-end CoA-ribonucleoside in mRNA + H2O = 3'-dephospho-CoA + a 5'-end phospho-ribonucleoside in mRNA + H(+). Decapping enzyme for NAD-capped RNAs: specifically hydrolyzes the nicotinamide adenine dinucleotide (NAD) cap from a subset of RNAs by removing the entire NAD moiety from the 5'-end of an NAD-capped RNA. The NAD-cap is present at the 5'-end of some RNAs and snoRNAs. In contrast to the canonical 5'-end N7 methylguanosine (m7G) cap, the NAD cap promotes mRNA decay. Preferentially acts on NAD-capped transcripts in response to environmental stress. Also acts as a non-canonical decapping enzyme that removes the entire cap structure of m7G capped or incompletely capped RNAs and mediates their subsequent degradation. Specifically degrades pre-mRNAs with a defective 5'-end m7G cap and is part of a pre-mRNA capping quality control. Has decapping activity toward incomplete 5'-end m7G cap mRNAs such as unmethylated 5'-end-capped RNA (cap0), while it has no activity toward 2'-O-ribose methylated m7G cap (cap1). In contrast to canonical decapping enzymes DCP2 and NUDT16, which cleave the cap within the triphosphate linkage, the decapping activity releases the entire cap structure GpppN and a 5'-end monophosphate RNA. Also has 5'-3' exoribonuclease activities: The 5'-end monophosphate RNA is then degraded by the 5'-3' exoribonuclease activity, enabling this enzyme to decap and degrade incompletely capped mRNAs. Also possesses RNA 5'-pyrophosphohydrolase activity by hydrolyzing the 5'-end triphosphate to release pyrophosphates. Exhibits decapping activity towards FAD-capped RNAs. Exhibits decapping activity towards dpCoA-capped RNAs in vitro. This is Decapping and exoribonuclease protein from Bos taurus (Bovine).